A 291-amino-acid chain; its full sequence is uncharacterized protein (291 aa).

10 consecutive transmembrane segments (helical) span residues isoleucine 5–threonine 23, isoleucine 33–phenylalanine 52, proline 69–tryptophan 91, valine 101–phenylalanine 120, valine 127–leucine 144, glycine 148–alanine 165, isoleucine 172–tryptophan 194, leucine 209–valine 228, isoleucine 235–glycine 257, and serine 262–valine 284.

Belongs to the EamA transporter family.

Its subcellular location is the cell membrane. This is an uncharacterized protein from Pasteurella multocida (strain Pm70).